The following is a 1607-amino-acid chain: Putative molluscan insulin-related peptide(s) receptor (1607 aa).

A signal peptide spans 1–35 (MHPGSISFNMIINKCIPICLFILFIMMMEFTVSKA). Residues Asn-82, Asn-188, Asn-245, Asn-275, Asn-332, Asn-343, Asn-495, Asn-520, Asn-663, Asn-710, Asn-778, Asn-796, Asn-802, Asn-868, Asn-879, Asn-940, and Asn-953 are each glycosylated (N-linked (GlcNAc...) asparagine). 3 consecutive Fibronectin type-III domains span residues 517–632 (HDLN…TYPF), 636–726 (EPTD…SKEE), and 756–861 (LPDE…TKDS). Topologically, residues 698 to 975 (EKVKIEEEGK…RPPDPESSNT (278 aa)) are extracellular. Positions 870–967 (TTVDTEIETN…LERFFIVPRP (98 aa)) constitute a Fibronectin type-III 4 domain. Residues 976-996 (LLIVAIVLAFFGVLTVSLIVA) traverse the membrane as a helical segment. The Cytoplasmic portion of the chain corresponds to 997 to 1607 (CVYYKQKIRS…WSTLKMVLVL (611 aa)). Positions 1037-1308 (IKLIKELGQG…AIIEYLLPKL (272 aa)) constitute a Protein kinase domain. ATP contacts are provided by residues 1043–1051 (LGQGSFGMV) and Lys-1072. Asp-1173 acts as the Proton acceptor in catalysis. Tyr-1199 carries the post-translational modification Phosphotyrosine; by autocatalysis. Disordered regions lie at residues 1328 to 1352 (GAGE…LSCE) and 1501 to 1539 (TLNG…SSSW). A compositionally biased stretch (polar residues) spans 1503–1515 (NGNQSSHNNNSFE). Residues 1524–1538 (SGPASESSNGVSSSS) are compositionally biased toward low complexity.

This sequence belongs to the protein kinase superfamily. Tyr protein kinase family. Insulin receptor subfamily. As to quaternary structure, probable tetramer of 2 alpha and 2 beta chains linked by disulfide bonds. The alpha chains contribute to the formation of the ligand-binding domain, while the beta chains carry the kinase domain. Mn(2+) serves as cofactor.

The protein resides in the membrane. It catalyses the reaction L-tyrosyl-[protein] + ATP = O-phospho-L-tyrosyl-[protein] + ADP + H(+). In terms of biological role, this receptor probably binds to the four different molluscan insulin-related peptides and has a tyrosine-protein kinase activity. This is Putative molluscan insulin-related peptide(s) receptor from Lymnaea stagnalis (Great pond snail).